The chain runs to 183 residues: Calcium-binding protein M (183 aa).

Residue Gly-2 is the site of N-myristoyl glycine attachment. 4 EF-hand domains span residues 25–60 (EEVA…KLPN), 61–96 (YPED…IGKG), 97–132 (SAED…MKNV), and 142–177 (DIEL…SPSL). Ca(2+)-binding residues include Asp-74, Asp-76, Ser-78, Thr-80, Glu-85, Asp-110, Asp-112, Ser-114, Glu-121, Asp-155, Asp-157, Asn-159, and Glu-166.

This sequence belongs to the recoverin family.

The chain is Calcium-binding protein M (cbpM) from Dictyostelium discoideum (Social amoeba).